The sequence spans 376 residues: MNFYSINLVKAHLINYPCPLNINFLWNYGFLLGIIFFIQIITGVFLASRYTPDVSYAYYSIQHILRELWSGWCFRYMHATGASLVFLLTYLHILRGLNYSYMYLPLSWISGLILFMIFIVTAFVGYVLPWGQMSYWGATVITNLLSSIPVAVIWICGGYTVSDPTIKRFFVLHFILPFIGLCIVFIHIFFLHLHGSTNPLGYDTALKIPFYPNLLSLDVKGFNNVIILFLIQSLFGIIPLSHPDNAIVVNTYVTPSQIVPEWYFLPFYAMLKTVPSKPAGLVIVLLSLQLLFLLAEQRSLTTIIQFKMIFGARDYSVPIIWFMCAFYALLWIGCQLPQDIFILYGRLFIVLFFCSGLFVLVHYRRTHYDYSSQANI.

Transmembrane regions (helical) follow at residues 28 to 48 (YGFL…FLAS), 72 to 94 (WCFR…LHIL), 107 to 127 (SWIS…VGYV), and 169 to 189 (FFVL…IHIF). Residues histidine 78 and histidine 92 each coordinate heme b. 2 residues coordinate heme b: histidine 173 and histidine 187. Histidine 192 is an a ubiquinone binding site. The next 4 membrane-spanning stretches (helical) occupy residues 214 to 234 (LLSL…IQSL), 274 to 294 (VPSK…LFLL), 317 to 337 (VPII…CQLP), and 340 to 360 (IFIL…LFVL).

It belongs to the cytochrome b family. As to quaternary structure, the main subunits of complex b-c1 are: cytochrome b, cytochrome c1 and the Rieske protein. Heme b serves as cofactor.

It is found in the mitochondrion inner membrane. In terms of biological role, component of the ubiquinol-cytochrome c reductase complex (complex III or cytochrome b-c1 complex) that is part of the mitochondrial respiratory chain. The b-c1 complex mediates electron transfer from ubiquinol to cytochrome c. Contributes to the generation of a proton gradient across the mitochondrial membrane that is then used for ATP synthesis. The polypeptide is Cytochrome b (MT-CYB) (Plasmodium falciparum).